Consider the following 388-residue polypeptide: Norsolorinic acid reductase A (388 aa).

Asp-69 is an NADP(+) binding site. Tyr-74 serves as the catalytic Proton donor. His-148 lines the substrate pocket. NADP(+)-binding positions include 178–179, Gln-204, 233–243, and 300–308; these read SD, GVLGRGQFRSA, and RKVEHLKEN.

It belongs to the aldo/keto reductase family. Aldo/keto reductase 2 subfamily.

Its pathway is mycotoxin biosynthesis; aflatoxin biosynthesis. Its function is as follows. Norsolorinic acid reductase; part of the gene cluster that mediates the biosynthesis of aflatoxins, a group of polyketide-derived furanocoumarins, and part of the most toxic and carcinogenic compounds among the known mycotoxins. The four major aflatoxins produced by A.parasiticus are aflatoxin B1 (AFB1), aflatoxin B2 (AFB2), aflatoxin G1 (AFG1) and aflatoxin G2 (AFG2). Within the aflatoxin pathway, the norsolorinic acid reductase aflE may play a role in the conversion of norsolorinic acid (NOR) to averantin (AVN). The biosynthesis of aflatoxins begins with the norsolorinic acid synthase aflC that combines a hexanoyl starter unit produced by the fatty acid synthase aflA/aflB and 7 malonyl-CoA extender units to synthesize the precursor NOR. The second step is the conversion of NOR to averantin and requires the norsolorinic acid ketoreductase aflD, which catalyzes the dehydration of norsolorinic acid to form (1'S)-averantin. The norsolorinic acid reductases aflE and aflF may also play a role in the conversion of NOR to AVN. The cytochrome P450 monooxygenase aflG then catalyzes the hydroxylation of AVN to 5'hydroxyaverantin (HAVN). The next step is performed by the 5'-hydroxyaverantin dehydrogenase aflH that transforms HAVN to 5'-oxoaverantin (OAVN) which is further converted to averufin (AVF) by aflK that plays a dual role in the pathway, as a 5'-oxoaverantin cyclase that mediates conversion of 5'-oxoaverantin, as well as a versicolorin B synthase in a later step in the pathway. The averufin oxidase aflI catalyzes the conversion of AVF to versiconal hemiacetal acetate (VHA). VHA is then the substrate for the versiconal hemiacetal acetate esterase aflJ to yield versiconal (VAL). Versicolorin B synthase aflK then converts VAL to versicolorin B (VERB) by closing the bisfuran ring of aflatoxin which is required for DNA-binding, thus giving to aflatoxin its activity as a mutagen. Then, the activity of the versicolorin B desaturase aflL leads to versicolorin A (VERA). A branch point starts from VERB since it can also be converted to dihydrodemethylsterigmatocystin (DMDHST), probably also by aflL, VERA being a precursor for aflatoxins B1 and G1, and DMDHST for aflatoxins B2 and G2. Next, the versicolorin reductase aflM and the cytochrome P450 monooxygenase aflN are involved in conversion of VERA to demethylsterigmatocystin (DMST). AflX and aflY seem also involved in this step, through probable aflX-mediated epoxide ring-opening step following versicolorin A oxidation and aflY-mediated Baeyer-Villiger oxidation required for the formation of the xanthone ring. The methyltransferase aflO then leads to the modification of DMST to sterigmatocystin (ST), and of DMDHST to dihydrosterigmatocystin (DHST). Both ST and DHST are then substrates of the O-methyltransferase aflP to yield O-methylsterigmatocystin (OMST) and dihydro-O-methylsterigmatocystin (DHOMST), respectively. Finally OMST is converted to aflatoxins B1 and G1, and DHOMST to aflatoxins B2 and G2, via the action of several enzymes including O-methylsterigmatocystin oxidoreductase aflQ, the cytochrome P450 monooxygenase aflU, but also the NADH-dependent flavin oxidoreductase nadA which is specifically required for the synthesis of AFG1. This chain is Norsolorinic acid reductase A, found in Aspergillus parasiticus (strain ATCC 56775 / NRRL 5862 / SRRC 143 / SU-1).